We begin with the raw amino-acid sequence, 161 residues long: Putative acetyltransferase SAR0816 (161 aa).

This sequence belongs to the transferase hexapeptide repeat family.

This is Putative acetyltransferase SAR0816 from Staphylococcus aureus (strain MRSA252).